The sequence spans 204 residues: Peptide deformylase (204 aa).

Residues C131 and H174 each contribute to the Fe cation site. The active site involves E175. A Fe cation-binding site is contributed by H178.

The protein belongs to the polypeptide deformylase family. The cofactor is Fe(2+).

It carries out the reaction N-terminal N-formyl-L-methionyl-[peptide] + H2O = N-terminal L-methionyl-[peptide] + formate. Removes the formyl group from the N-terminal Met of newly synthesized proteins. Requires at least a dipeptide for an efficient rate of reaction. N-terminal L-methionine is a prerequisite for activity but the enzyme has broad specificity at other positions. This Streptococcus gordonii (strain Challis / ATCC 35105 / BCRC 15272 / CH1 / DL1 / V288) protein is Peptide deformylase.